Consider the following 215-residue polypeptide: Fanconi anemia core complex-associated protein 24 (215 aa).

The tract at residues 160 to 215 is ruvA domain 2-like; the sequence is LRTVQQIPGVGKVKAPLLLQKFPSIQQLSNASIGELEQVVGQAVAQQIHAFFTQPR.

In terms of assembly, belongs to the multisubunit FA complex composed of FANCA, FANCB, FANCC, FANCE, FANCF, FANCG, FANCL/PHF9, FANCM and FAAP24. Interacts with FANCM.

It localises to the nucleus. Plays a role in DNA repair through recruitment of the FA core complex to damaged DNA. Regulates FANCD2 monoubiquitination upon DNA damage. Induces chromosomal instability as well as hypersensitivity to DNA cross-linking agents, when repressed. Targets FANCM/FAAP24 complex to the DNA, preferentially to single strand DNA. The protein is Fanconi anemia core complex-associated protein 24 of Homo sapiens (Human).